The sequence spans 333 residues: DNA-directed RNA polymerase subunit alpha (333 aa).

Positions 1–233 are alpha N-terminal domain (alpha-NTD); sequence MVREKVKVST…NLFIPFLHVE (233 aa). Residues 267 to 333 are alpha C-terminal domain (alpha-CTD); it reads LVFQYIFIDQ…LEKNRKFISN (67 aa).

It belongs to the RNA polymerase alpha chain family. In plastids the minimal PEP RNA polymerase catalytic core is composed of four subunits: alpha, beta, beta', and beta''. When a (nuclear-encoded) sigma factor is associated with the core the holoenzyme is formed, which can initiate transcription.

The protein localises to the plastid. It is found in the chloroplast. It carries out the reaction RNA(n) + a ribonucleoside 5'-triphosphate = RNA(n+1) + diphosphate. Functionally, DNA-dependent RNA polymerase catalyzes the transcription of DNA into RNA using the four ribonucleoside triphosphates as substrates. This is DNA-directed RNA polymerase subunit alpha from Aethionema grandiflorum (Persian stone-cress).